The chain runs to 259 residues: Type-2Aa cytolytic delta-endotoxin (259 aa).

This sequence belongs to the cyt1/cyt2 endotoxin family. As to quaternary structure, homodimer (protoxin) and monomer (active toxin). In terms of processing, active after proteolytic processing.

In terms of biological role, kills the larvae of dipteran insects by making pores in the epithelial cell membrane of the insect midgut. The polypeptide is Type-2Aa cytolytic delta-endotoxin (cyt2Aa1) (Bacillus thuringiensis subsp. kyushuensis).